The sequence spans 363 residues: Histidinol-phosphate aminotransferase (363 aa).

Lys218 carries the N6-(pyridoxal phosphate)lysine modification.

Belongs to the class-II pyridoxal-phosphate-dependent aminotransferase family. Histidinol-phosphate aminotransferase subfamily. In terms of assembly, homodimer. Pyridoxal 5'-phosphate serves as cofactor.

It catalyses the reaction L-histidinol phosphate + 2-oxoglutarate = 3-(imidazol-4-yl)-2-oxopropyl phosphate + L-glutamate. It participates in amino-acid biosynthesis; L-histidine biosynthesis; L-histidine from 5-phospho-alpha-D-ribose 1-diphosphate: step 7/9. This Xanthomonas oryzae pv. oryzae (strain MAFF 311018) protein is Histidinol-phosphate aminotransferase.